The following is a 446-amino-acid chain: Serine decarboxylase 3 (446 aa).

Substrate is bound at residue histidine 162. Lysine 274 is modified (N6-(pyridoxal phosphate)lysine).

This sequence belongs to the group II decarboxylase family. Pyridoxal 5'-phosphate is required as a cofactor.

It catalyses the reaction L-serine + H(+) = ethanolamine + CO2. In terms of biological role, catalyzes the biosynthesis of ethanolamine from serine. Decarboxylation of free serine is the major source of ethanolamine production in plants and ethanolamine metabolism is crucial for the synthesis of choline, phosphatidylethanolamine (PE) and phosphatidylcholine (PC), and thus for plant growth. The chain is Serine decarboxylase 3 from Oryza sativa subsp. japonica (Rice).